The following is a 131-amino-acid chain: Small ribosomal subunit protein uS8 (131 aa).

It belongs to the universal ribosomal protein uS8 family. Part of the 30S ribosomal subunit. Contacts proteins S5 and S12.

One of the primary rRNA binding proteins, it binds directly to 16S rRNA central domain where it helps coordinate assembly of the platform of the 30S subunit. This is Small ribosomal subunit protein uS8 from Methylobacillus flagellatus (strain ATCC 51484 / DSM 6875 / VKM B-1610 / KT).